We begin with the raw amino-acid sequence, 537 residues long: Chaperonin GroEL (537 aa).

ATP-binding positions include 29 to 32 (TLGP), 86 to 90 (DGTTT), G413, and D492.

The protein belongs to the chaperonin (HSP60) family. Forms a cylinder of 14 subunits composed of two heptameric rings stacked back-to-back. Interacts with the co-chaperonin GroES.

The protein localises to the cytoplasm. It carries out the reaction ATP + H2O + a folded polypeptide = ADP + phosphate + an unfolded polypeptide.. Together with its co-chaperonin GroES, plays an essential role in assisting protein folding. The GroEL-GroES system forms a nano-cage that allows encapsulation of the non-native substrate proteins and provides a physical environment optimized to promote and accelerate protein folding. The polypeptide is Chaperonin GroEL (Dehalococcoides mccartyi (strain ATCC BAA-2100 / JCM 16839 / KCTC 5957 / BAV1)).